The primary structure comprises 323 residues: DNA-directed RNA polymerase subunit alpha (323 aa).

Residues 1 to 225 (MLDIAMPKIE…QYSQTIADFN (225 aa)) are alpha N-terminal domain (alpha-NTD). Residues 246-323 (IYDTPIEELD…SHAARAEIEG (78 aa)) form an alpha C-terminal domain (alpha-CTD) region.

This sequence belongs to the RNA polymerase alpha chain family. Homodimer. The RNAP catalytic core consists of 2 alpha, 1 beta, 1 beta' and 1 omega subunit. When a sigma factor is associated with the core the holoenzyme is formed, which can initiate transcription.

It catalyses the reaction RNA(n) + a ribonucleoside 5'-triphosphate = RNA(n+1) + diphosphate. In terms of biological role, DNA-dependent RNA polymerase catalyzes the transcription of DNA into RNA using the four ribonucleoside triphosphates as substrates. In Roseiflexus sp. (strain RS-1), this protein is DNA-directed RNA polymerase subunit alpha.